Here is a 216-residue protein sequence, read N- to C-terminus: Probable RNA 2'-phosphotransferase 2 (216 aa).

This sequence belongs to the KptA/TPT1 family.

Removes the 2'-phosphate from RNA via an intermediate in which the phosphate is ADP-ribosylated by NAD followed by a presumed transesterification to release the RNA and generate ADP-ribose 1''-2''-cyclic phosphate (APPR&gt;P). May function as an ADP-ribosylase. The protein is Probable RNA 2'-phosphotransferase 2 (kptA2) of Archaeoglobus fulgidus (strain ATCC 49558 / DSM 4304 / JCM 9628 / NBRC 100126 / VC-16).